Here is a 143-residue protein sequence, read N- to C-terminus: Mini-ribonuclease 3 (143 aa).

Residue D35 is part of the active site.

The protein belongs to the MrnC RNase family. As to quaternary structure, homodimer. Requires Mg(2+) as cofactor.

It is found in the cytoplasm. Involved in correct processing of both the 5' and 3' ends of 23S rRNA precursor. Processes 30S rRNA precursor transcript even in absence of ribonuclease 3 (Rnc); Rnc processes 30S rRNA into smaller rRNA precursors. The chain is Mini-ribonuclease 3 from Synechocystis sp. (strain ATCC 27184 / PCC 6803 / Kazusa).